A 39-amino-acid chain; its full sequence is U1-nemetoxin-Csp1c (39 aa).

4 disulfide bridges follow: Cys-1-Cys-15, Cys-8-Cys-19, Cys-14-Cys-36, and Cys-25-Cys-32.

As to expression, expressed by the venom gland.

The protein resides in the secreted. In terms of biological role, causes paralysis to insect larvae (H.virescens). This toxin is active only on insects. The polypeptide is U1-nemetoxin-Csp1c (Calisoga sp. (Spider)).